The chain runs to 250 residues: Carboxymethylproline synthase (250 aa).

A malonyl-CoA-binding site is contributed by Ala-60–Phe-64.

The protein belongs to the enoyl-CoA hydratase/isomerase family. As to quaternary structure, homotrimer.

It carries out the reaction (S)-1-pyrroline-5-carboxylate + malonyl-CoA + H2O + H(+) = (2S,5S)-5-carboxymethylproline + CO2 + CoA. It participates in antibiotic biosynthesis; carbapenem biosynthesis. Functionally, catalyzes the formation of (2S,5S)-carboxymethylproline (t-CMP) from malonyl-CoA and (S)-1-pyrroline-5-carboxylate, the first step in the biosynthesis of (5R)-carbapen-2-em-3-carboxylate, a beta-lactam antibiotic of the carbapenem class. Also catalyzes the independent decarboxylation of malonyl-CoA and methylmalonyl-CoA and the hydrolysis of CoA esters such as acetyl-CoA and propionyl-CoA. Catalyzes the reaction with a C2 epimeric mixture of methylmalonyl-CoA to give a 55:45 mixture of (6R)- and (6S)-epimers of 6-methyl-t-CMP, under standard incubation conditions. The chain is Carboxymethylproline synthase from Pectobacterium carotovorum subsp. carotovorum (Erwinia carotovora subsp. carotovora).